The primary structure comprises 342 residues: Gibberellin cluster GA4 desaturase (342 aa).

The tract at residues 127 to 183 is disordered; sequence PELAPPYPMPGKSSSGSKEREAIPANELPTTRAKGFQKGEEEGPVRKPHKDWGPSGA.

It belongs to the asaB hydroxylase/desaturase family.

The protein operates within plant hormone biosynthesis; gibberellin biosynthesis. In terms of biological role, GA4 desaturase; part of the gene cluster that mediates the biosynthesis of gibberellins (GAs), diterpenoids that may provide a selective advantage during infection of the preferred host plant, rice. Gibberellins (GAs) are diterpenoids and are synthesized via the mevalonate pathway. Biosynthesis of the major metabolite GA3 (gibberellic acid) from geranylgeranyl diphosphate (GGPP) requires 13 steps. The GGPP produced by the geranylgeranyl diphosphate synthase GGS2 is converted to ent-kaurene via ent-copalyldiphosphate in a two-step cyclization reaction performed by the bifunctional ent-copalyl diphosphate synthase/ent-kaurene synthase enzyme (CPS/KS). Ent-Kaurene is metabolized to GAs by a series of oxidation reactions catalyzed by cytochrome P450 monooxygenases. Cytochrome P450 monooxygenase P450-4 is an ent-kaurene oxidase that catalyzes the three oxidation steps between ent-kaurene and ent-kaurenoic acid. The highly multifunctional cytochrome P450 monooxygenase P450-1 then catalyzes four steps involving oxidation at two carbon atoms, in the main pathway from ent-kaurenoic acid to GA14 via GA12-aldehyde as well as producing kaurenolides and fujenoic acids as by-products. The cytochrome P450 monooxygenase P450-2 then converts GA14 to GA4 by removal of C-20. GA4 is further converted to GA7 by the GA4 desaturase DES via 1,2-desaturation before cytochrome P450 monooxygenase P450-3, a 13-hydroxylase, hydroxylates GA7 to GA3, the final product of the GA-biosynthetic pathway. The protein is Gibberellin cluster GA4 desaturase of Gibberella fujikuroi (strain CBS 195.34 / IMI 58289 / NRRL A-6831) (Bakanae and foot rot disease fungus).